A 65-amino-acid polypeptide reads, in one-letter code: Neurotoxin BmK-M3 (65 aa).

Residues 2–64 (RDAYIAKPEN…VPIRVWGKCH (63 aa)) enclose the LCN-type CS-alpha/beta domain. Disulfide bonds link Cys12/Cys63, Cys16/Cys36, Cys22/Cys46, and Cys26/Cys48.

Belongs to the long (4 C-C) scorpion toxin superfamily. Sodium channel inhibitor family. Alpha subfamily. Expressed by the venom gland.

Its subcellular location is the secreted. Its function is as follows. Binds to sodium channels (Nav) and inhibits the inactivation of the activated channels, thereby blocking neuronal transmission. In Olivierus martensii (Manchurian scorpion), this protein is Neurotoxin BmK-M3.